The following is a 257-amino-acid chain: Deoxyribose-phosphate aldolase (257 aa).

Aspartate 102 functions as the Proton donor/acceptor in the catalytic mechanism. The active-site Schiff-base intermediate with acetaldehyde is the lysine 166. Lysine 198 serves as the catalytic Proton donor/acceptor.

It belongs to the DeoC/FbaB aldolase family. DeoC type 2 subfamily.

The protein resides in the cytoplasm. The enzyme catalyses 2-deoxy-D-ribose 5-phosphate = D-glyceraldehyde 3-phosphate + acetaldehyde. The protein operates within carbohydrate degradation; 2-deoxy-D-ribose 1-phosphate degradation; D-glyceraldehyde 3-phosphate and acetaldehyde from 2-deoxy-alpha-D-ribose 1-phosphate: step 2/2. In terms of biological role, catalyzes a reversible aldol reaction between acetaldehyde and D-glyceraldehyde 3-phosphate to generate 2-deoxy-D-ribose 5-phosphate. The sequence is that of Deoxyribose-phosphate aldolase from Aeromonas hydrophila subsp. hydrophila (strain ATCC 7966 / DSM 30187 / BCRC 13018 / CCUG 14551 / JCM 1027 / KCTC 2358 / NCIMB 9240 / NCTC 8049).